A 180-amino-acid chain; its full sequence is Bifunctional protein PyrR (180 aa).

Residues 101 to 113 (LIVVDDVLFTGRT) carry the PRPP-binding motif.

It belongs to the purine/pyrimidine phosphoribosyltransferase family. PyrR subfamily. As to quaternary structure, homodimer and homohexamer; in equilibrium.

It catalyses the reaction UMP + diphosphate = 5-phospho-alpha-D-ribose 1-diphosphate + uracil. Functionally, regulates transcriptional attenuation of the pyrimidine nucleotide (pyr) operon by binding in a uridine-dependent manner to specific sites on pyr mRNA. This disrupts an antiterminator hairpin in the RNA and favors formation of a downstream transcription terminator, leading to a reduced expression of downstream genes. Also displays a weak uracil phosphoribosyltransferase activity which is not physiologically significant. The polypeptide is Bifunctional protein PyrR (Bacillus pumilus (strain SAFR-032)).